Here is a 965-residue protein sequence, read N- to C-terminus: Chondroitin synthase (965 aa).

The tract at residues 132–418 is galactosaminyltransferase; A1 domain; that stretch reads FTWYKNRKKS…IVKEKVPYIY (287 aa). UDP-N-acetyl-alpha-D-galactosamine-binding positions include Pro-158, Arg-162, Asp-189, Tyr-218, Arg-224, and 240–241; that span reads DC. Asp-242 contacts Mn(2+). Residue 362-363 participates in UDP-N-acetyl-alpha-D-galactosamine binding; the sequence is ED. His-387 provides a ligand contact to Mn(2+). The glucuronosyltransferase; A2 domain stretch occupies residues 419–683; it reads RKLLPIEDSH…ESRKYIFNKT (265 aa). Residues Tyr-442, Asp-470, and 518-521 each bind UDP-alpha-D-glucuronate; that span reads QLDS. Asp-522 provides a ligand contact to Mn(2+). UDP-alpha-D-glucuronate contacts are provided by residues His-582 and 604–605; that span reads AV. His-632 lines the Mn(2+) pocket.

Belongs to the glycosyltransferase 2 family. CS/HAS subfamily. Mn(2+) serves as cofactor.

The protein localises to the cell membrane. It catalyses the reaction 3-O-(beta-D-GlcA-(1-&gt;3)-beta-D-GalNAc-(1-&gt;4)-beta-D-GlcA-(1-&gt;3)-beta-D-Gal-(1-&gt;3)-beta-D-Gal-(1-&gt;4)-beta-D-Xyl)-L-seryl-[protein] + UDP-N-acetyl-alpha-D-galactosamine = 3-O-(beta-D-GalNAc-(1-&gt;4)-beta-D-GlcA-(1-&gt;3)-beta-D-GalNAc-(1-&gt;4)-beta-D-GlcA-(1-&gt;3)-beta-D-Gal-(1-&gt;3)-beta-D-Gal-(1-&gt;4)-beta-D-Xyl)-L-seryl-[protein] + UDP + H(+). It carries out the reaction 3-O-{beta-D-GlcA-(1-&gt;3)-[beta-D-GalNAc-(1-&gt;4)-beta-D-GlcA-(1-&gt;3)](n)-beta-D-GalNAc-(1-&gt;4)-beta-D-GlcA-(1-&gt;3)-beta-D-Gal-(1-&gt;3)-beta-D-Gal-(1-&gt;4)-beta-D-Xyl}-L-seryl-[protein] + UDP-N-acetyl-alpha-D-galactosamine = 3-O-{[beta-D-GalNAc-(1-&gt;4)-beta-D-GlcA-(1-&gt;3)](n+1)-beta-D-GalNAc-(1-&gt;4)-beta-D-GlcA-(1-&gt;3)-beta-D-Gal-(1-&gt;3)-beta-D-Gal-(1-&gt;4)-beta-D-Xyl}-L-seryl-[protein] + UDP + H(+). The catalysed reaction is 3-O-(beta-D-GalNAc-(1-&gt;4)-beta-D-GlcA-(1-&gt;3)-beta-D-Gal-(1-&gt;3)-beta-D-Gal-(1-&gt;4)-beta-D-Xyl)-L-seryl-[protein] + UDP-alpha-D-glucuronate = 3-O-(beta-D-GlcA-(1-&gt;3)-beta-D-GalNAc-(1-&gt;4)-beta-D-GlcA-(1-&gt;3)-beta-D-Gal-(1-&gt;3)-beta-D-Gal-(1-&gt;4)-beta-D-Xyl)-L-seryl-[protein] + UDP + H(+). The enzyme catalyses 3-O-{[beta-D-GalNAc-(1-&gt;4)-beta-D-GlcA-(1-&gt;3)](n)-beta-D-GalNAc-(1-&gt;4)-beta-D-GlcA-(1-&gt;3)-beta-D-Gal-(1-&gt;3)-beta-D-Gal-(1-&gt;4)-beta-D-Xyl}-L-seryl-[protein] + UDP-alpha-D-glucuronate = 3-O-{beta-D-GlcA-(1-&gt;3)-[beta-D-GalNAc-(1-&gt;4)-beta-D-GlcA-(1-&gt;3)](n)-beta-D-GalNAc-(1-&gt;4)-beta-D-GlcA-(1-&gt;3)-beta-D-Gal-(1-&gt;3)-beta-D-Gal-(1-&gt;4)-beta-D-Xyl}-L-seryl-[protein] + UDP + H(+). In terms of biological role, glycosyltransferase that catalyzes elongation of chondroitin, a polysaccharide composed of a repeating disaccharide of N-acetylgalactosamine (GalNAc) and glucuronic acid (GlcUA) units, by alternatively transferring the GlcUA and GalNAc moiety from UDP-GlcUA and UDP-GalNAc to the non-reducing ends of the chondroitin chain. Each chondroitin unit has the composition beta-(1-&gt;4)-GlcUA-beta-(1-&gt;3)-GalNAc. The chain is Chondroitin synthase (fcbD) from Pasteurella multocida (strain Pm70).